A 189-amino-acid polypeptide reads, in one-letter code: Segregation and condensation protein B (189 aa).

Belongs to the ScpB family. Homodimer. Homodimerization may be required to stabilize the binding of ScpA to the Smc head domains. Component of a cohesin-like complex composed of ScpA, ScpB and the Smc homodimer, in which ScpA and ScpB bind to the head domain of Smc. The presence of the three proteins is required for the association of the complex with DNA.

It is found in the cytoplasm. Functionally, participates in chromosomal partition during cell division. May act via the formation of a condensin-like complex containing Smc and ScpA that pull DNA away from mid-cell into both cell halves. The protein is Segregation and condensation protein B of Streptococcus sanguinis (strain SK36).